Reading from the N-terminus, the 114-residue chain is MEGDVLSGFGDRHNMDGKLLQSFQKSFVDVQDILDQNRLLINEINQNHESKQPDNLGRNVGLIKELNNNIRRVASLYGDLSHSFARSVDASSEGESSGTLKSDGKANQKRFRSG.

The disordered stretch occupies residues 87–114 (SVDASSEGESSGTLKSDGKANQKRFRSG). Residues 89–100 (DASSEGESSGTL) are compositionally biased toward polar residues.

Belongs to the EARLY FLOWERING 4 family. As to quaternary structure, homodimer.

The protein localises to the nucleus. Its function is as follows. Component of the central CCA1/LHY-TOC1 feedback loop in the circadian clock that promotes clock accuracy and is required for sustained rhythms in the absence of daily light/dark cycles. The sequence is that of Protein ELF4-LIKE 4 (EFL4) from Arabidopsis thaliana (Mouse-ear cress).